Consider the following 363-residue polypeptide: Probable L-tyrosine/L-aspartate decarboxylase (363 aa).

N6-(pyridoxal phosphate)lysine is present on Lys-224.

This sequence belongs to the group II decarboxylase family. MfnA subfamily. The cofactor is pyridoxal 5'-phosphate.

The enzyme catalyses L-tyrosine + H(+) = tyramine + CO2. The catalysed reaction is L-aspartate + H(+) = beta-alanine + CO2. Its pathway is cofactor biosynthesis; methanofuran biosynthesis. It participates in cofactor biosynthesis; coenzyme A biosynthesis. Functionally, catalyzes the decarboxylation of L-tyrosine to produce tyramine for methanofuran biosynthesis. Can also catalyze the decarboxylation of L-aspartate to produce beta-alanine for coenzyme A (CoA) biosynthesis. The chain is Probable L-tyrosine/L-aspartate decarboxylase from Methanosphaerula palustris (strain ATCC BAA-1556 / DSM 19958 / E1-9c).